The following is a 127-amino-acid chain: Protein ApaG (127 aa).

The 125-residue stretch at 3–127 (DDPRYRVEVE…FVLSVPRTLH (125 aa)) folds into the ApaG domain.

The polypeptide is Protein ApaG (Xanthomonas campestris pv. campestris (strain 8004)).